The primary structure comprises 634 residues: 1-deoxy-D-xylulose-5-phosphate synthase (634 aa).

Thiamine diphosphate-binding positions include His74 and 115–117 (AHS). Asp146 provides a ligand contact to Mg(2+). Thiamine diphosphate contacts are provided by residues 147–148 (GA), Asn176, Tyr283, and Glu365. Asn176 lines the Mg(2+) pocket.

The protein belongs to the transketolase family. DXPS subfamily. In terms of assembly, homodimer. Mg(2+) is required as a cofactor. It depends on thiamine diphosphate as a cofactor.

It catalyses the reaction D-glyceraldehyde 3-phosphate + pyruvate + H(+) = 1-deoxy-D-xylulose 5-phosphate + CO2. The protein operates within metabolic intermediate biosynthesis; 1-deoxy-D-xylulose 5-phosphate biosynthesis; 1-deoxy-D-xylulose 5-phosphate from D-glyceraldehyde 3-phosphate and pyruvate: step 1/1. Functionally, catalyzes the acyloin condensation reaction between C atoms 2 and 3 of pyruvate and glyceraldehyde 3-phosphate to yield 1-deoxy-D-xylulose-5-phosphate (DXP). The chain is 1-deoxy-D-xylulose-5-phosphate synthase from Burkholderia orbicola (strain MC0-3).